Here is a 490-residue protein sequence, read N- to C-terminus: Aspartyl/glutamyl-tRNA(Asn/Gln) amidotransferase subunit B (490 aa).

The protein belongs to the GatB/GatE family. GatB subfamily. As to quaternary structure, heterotrimer of A, B and C subunits.

It catalyses the reaction L-glutamyl-tRNA(Gln) + L-glutamine + ATP + H2O = L-glutaminyl-tRNA(Gln) + L-glutamate + ADP + phosphate + H(+). The catalysed reaction is L-aspartyl-tRNA(Asn) + L-glutamine + ATP + H2O = L-asparaginyl-tRNA(Asn) + L-glutamate + ADP + phosphate + 2 H(+). Its function is as follows. Allows the formation of correctly charged Asn-tRNA(Asn) or Gln-tRNA(Gln) through the transamidation of misacylated Asp-tRNA(Asn) or Glu-tRNA(Gln) in organisms which lack either or both of asparaginyl-tRNA or glutaminyl-tRNA synthetases. The reaction takes place in the presence of glutamine and ATP through an activated phospho-Asp-tRNA(Asn) or phospho-Glu-tRNA(Gln). The protein is Aspartyl/glutamyl-tRNA(Asn/Gln) amidotransferase subunit B of Prochlorococcus marinus (strain MIT 9312).